We begin with the raw amino-acid sequence, 243 residues long: Protein GIGAS CELL1 (243 aa).

In terms of assembly, interacts with APC/C activators such as FZR1, FZR2, FZR3, CDC20.1 and CDC20.5. Phosphorylated by CDKA-1 in complex with CYCA1-2. In terms of tissue distribution, expressed in rapidly dividing tissues such as shoot apical meristem and young leaves. Associated with cell division but also with specific cell types.

In terms of biological role, negative regulator of the anaphase-promoting complex/cyclosome (APC/C) ubiquitin ligase required for proper mitotic and meiotic progression and cell fate determination. Involved in entry into both meiosis I and meiosis II. Prevents endomitosis by preferentially inhibiting APC/C(CDC20). Required for megagametophyte and endosperm development. Triggers mitotic cyclins (e.g. CYCB1-1 and CYCB1-2) accumulation. Confers immunity to bacterial pathogens (e.g. Pseudomonas syringae pv. tomato DC3000), which is associated with increased expression of disease resistance (R) genes. GIG1 and PANS1 are part of a network linking centromere cohesion and cell cycle progression through control of APC/C activity. The sequence is that of Protein GIGAS CELL1 (GIG1) from Arabidopsis thaliana (Mouse-ear cress).